We begin with the raw amino-acid sequence, 508 residues long: MDIRAAEISAILKNQIKNFGQDAEVSEVGQVLSVGDGIARVYGLDNVQAGEMVEFPGGIRGMALNLESDNVGVVIFGSDRDIKEGDTVKRTGAIVEVPVGPELLGRVVDALGNPIDGKGPINSAIRSRVDVKAPGIIPRKGVHEPMSTGIKAIDALIPVGRGQRELVIGDRQTGKTAIILDTFLNQKPAHDAGGDDKMFCVYVAIGQKRSTVAQFVKVLEERGALKYSIIIAATASDPAPMQYLAPFAGCTMGEYFRDKGQHALIAYDDLSKQAVAYRQMSLLLRRPPGREAYPGDVFYLHSRLLERAAKLSDERGAGSLTALPVIETQGNDVSAFIPTNVISITDGQIFLETDLFYQGIRPAVNVGLSVSRVGSAAQIKAMKQVAGSIKGELAQYREMAAFAQFGSDLDAATQRLLNRGARLTELLKQPQFSPLKVEEQVVVIFAGVNGYLDKLAVSDVGRFEHGVLSYLRTEGKDILDAIRTEKAISDDVKGKLKAALDTFAKSFA.

169 to 176 serves as a coordination point for ATP; that stretch reads GDRQTGKT.

The protein belongs to the ATPase alpha/beta chains family. In terms of assembly, F-type ATPases have 2 components, CF(1) - the catalytic core - and CF(0) - the membrane proton channel. CF(1) has five subunits: alpha(3), beta(3), gamma(1), delta(1), epsilon(1). CF(0) has three main subunits: a(1), b(2) and c(9-12). The alpha and beta chains form an alternating ring which encloses part of the gamma chain. CF(1) is attached to CF(0) by a central stalk formed by the gamma and epsilon chains, while a peripheral stalk is formed by the delta and b chains.

The protein resides in the cell inner membrane. The enzyme catalyses ATP + H2O + 4 H(+)(in) = ADP + phosphate + 5 H(+)(out). Produces ATP from ADP in the presence of a proton gradient across the membrane. The alpha chain is a regulatory subunit. The sequence is that of ATP synthase subunit alpha from Allorhizobium ampelinum (strain ATCC BAA-846 / DSM 112012 / S4) (Agrobacterium vitis (strain S4)).